We begin with the raw amino-acid sequence, 294 residues long: N-acetylmuramic acid 6-phosphate etherase (294 aa).

The region spanning 56–219 (TSYSLKNGGR…STLSMVSVGK (164 aa)) is the SIS domain. E84 functions as the Proton donor in the catalytic mechanism. Residue E115 is part of the active site.

This sequence belongs to the GCKR-like family. MurNAc-6-P etherase subfamily. In terms of assembly, homodimer.

The enzyme catalyses N-acetyl-D-muramate 6-phosphate + H2O = N-acetyl-D-glucosamine 6-phosphate + (R)-lactate. Its pathway is amino-sugar metabolism; 1,6-anhydro-N-acetylmuramate degradation. It participates in amino-sugar metabolism; N-acetylmuramate degradation. It functions in the pathway cell wall biogenesis; peptidoglycan recycling. Its function is as follows. Specifically catalyzes the cleavage of the D-lactyl ether substituent of MurNAc 6-phosphate, producing GlcNAc 6-phosphate and D-lactate. Together with AnmK, is also required for the utilization of anhydro-N-acetylmuramic acid (anhMurNAc) either imported from the medium or derived from its own cell wall murein, and thus plays a role in cell wall recycling. The sequence is that of N-acetylmuramic acid 6-phosphate etherase from Francisella tularensis subsp. novicida (strain U112).